Reading from the N-terminus, the 309-residue chain is 4-hydroxy-3-methylbut-2-enyl diphosphate reductase (309 aa).

A [4Fe-4S] cluster-binding site is contributed by cysteine 12. Histidine 41 and histidine 74 together coordinate (2E)-4-hydroxy-3-methylbut-2-enyl diphosphate. 2 residues coordinate dimethylallyl diphosphate: histidine 41 and histidine 74. Positions 41 and 74 each coordinate isopentenyl diphosphate. Position 96 (cysteine 96) interacts with [4Fe-4S] cluster. (2E)-4-hydroxy-3-methylbut-2-enyl diphosphate is bound at residue histidine 124. Histidine 124 serves as a coordination point for dimethylallyl diphosphate. Histidine 124 provides a ligand contact to isopentenyl diphosphate. The active-site Proton donor is glutamate 126. Threonine 167 is a binding site for (2E)-4-hydroxy-3-methylbut-2-enyl diphosphate. Cysteine 197 is a [4Fe-4S] cluster binding site. (2E)-4-hydroxy-3-methylbut-2-enyl diphosphate-binding residues include serine 225, serine 226, asparagine 227, and serine 269. Dimethylallyl diphosphate-binding residues include serine 225, serine 226, asparagine 227, and serine 269. 4 residues coordinate isopentenyl diphosphate: serine 225, serine 226, asparagine 227, and serine 269.

The protein belongs to the IspH family. It depends on [4Fe-4S] cluster as a cofactor.

The catalysed reaction is isopentenyl diphosphate + 2 oxidized [2Fe-2S]-[ferredoxin] + H2O = (2E)-4-hydroxy-3-methylbut-2-enyl diphosphate + 2 reduced [2Fe-2S]-[ferredoxin] + 2 H(+). The enzyme catalyses dimethylallyl diphosphate + 2 oxidized [2Fe-2S]-[ferredoxin] + H2O = (2E)-4-hydroxy-3-methylbut-2-enyl diphosphate + 2 reduced [2Fe-2S]-[ferredoxin] + 2 H(+). Its pathway is isoprenoid biosynthesis; dimethylallyl diphosphate biosynthesis; dimethylallyl diphosphate from (2E)-4-hydroxy-3-methylbutenyl diphosphate: step 1/1. The protein operates within isoprenoid biosynthesis; isopentenyl diphosphate biosynthesis via DXP pathway; isopentenyl diphosphate from 1-deoxy-D-xylulose 5-phosphate: step 6/6. Its function is as follows. Catalyzes the conversion of 1-hydroxy-2-methyl-2-(E)-butenyl 4-diphosphate (HMBPP) into a mixture of isopentenyl diphosphate (IPP) and dimethylallyl diphosphate (DMAPP). Acts in the terminal step of the DOXP/MEP pathway for isoprenoid precursor biosynthesis. The protein is 4-hydroxy-3-methylbut-2-enyl diphosphate reductase of Pseudoalteromonas translucida (strain TAC 125).